Here is a 338-residue protein sequence, read N- to C-terminus: Glycerol-3-phosphate dehydrogenase [NAD(P)+] (338 aa).

Residues Ser13, Trp14, and Lys108 each contribute to the NADPH site. 3 residues coordinate sn-glycerol 3-phosphate: Lys108, Gly139, and Ser141. Position 143 (Ala143) interacts with NADPH. Residues Lys194, Asp247, Ser257, Arg258, and Asn259 each contribute to the sn-glycerol 3-phosphate site. Lys194 functions as the Proton acceptor in the catalytic mechanism. Position 258 (Arg258) interacts with NADPH. Residues Val282 and Glu284 each coordinate NADPH.

Belongs to the NAD-dependent glycerol-3-phosphate dehydrogenase family.

It localises to the cytoplasm. It carries out the reaction sn-glycerol 3-phosphate + NAD(+) = dihydroxyacetone phosphate + NADH + H(+). The enzyme catalyses sn-glycerol 3-phosphate + NADP(+) = dihydroxyacetone phosphate + NADPH + H(+). It functions in the pathway membrane lipid metabolism; glycerophospholipid metabolism. Functionally, catalyzes the reduction of the glycolytic intermediate dihydroxyacetone phosphate (DHAP) to sn-glycerol 3-phosphate (G3P), the key precursor for phospholipid synthesis. This is Glycerol-3-phosphate dehydrogenase [NAD(P)+] from Streptococcus pyogenes serotype M28 (strain MGAS6180).